A 152-amino-acid polypeptide reads, in one-letter code: Ubiquitin-conjugating enzyme E2 B (152 aa).

One can recognise a UBC core domain in the interval 4–150 (PARRRLMRDF…VSAIVEQSWN (147 aa)). Catalysis depends on cysteine 88, which acts as the Glycyl thioester intermediate.

The protein belongs to the ubiquitin-conjugating enzyme family. Interacts with RAD18, UBR2 and WAC.

Its subcellular location is the cell membrane. The protein resides in the nucleus. The catalysed reaction is S-ubiquitinyl-[E1 ubiquitin-activating enzyme]-L-cysteine + [E2 ubiquitin-conjugating enzyme]-L-cysteine = [E1 ubiquitin-activating enzyme]-L-cysteine + S-ubiquitinyl-[E2 ubiquitin-conjugating enzyme]-L-cysteine.. It functions in the pathway protein modification; protein ubiquitination. Functionally, E2 ubiquitin-conjugating enzyme that accepts ubiquitin from the ubiquitin-activating enzyme E1 and transfers it to a E3 ubiquitin-protein ligase. In vitro catalyzes 'Lys-11'-, as well as 'Lys-48'- and 'Lys-63'-linked polyubiquitination. Together with the E3 enzyme BRE1 (RNF20 and/or RNF40), plays a role in transcription regulation by catalyzing the monoubiquitination of histone H2B at 'Lys-120' to form H2BK120ub1. H2BK120ub1 gives a specific tag for epigenetic transcriptional activation, elongation by RNA polymerase II, telomeric silencing, and is also a prerequisite for H3K4me and H3K79me formation. May play a role in DNA repair. Associates to the E3 ligase RAD18 to form the UBE2B-RAD18 ubiquitin ligase complex involved in mono-ubiquitination of DNA-associated PCNA on 'Lys-164'. In association with the E3 enzyme UBR4, is involved in N-end rule-dependent protein degradation. May be involved in neurite outgrowth. The chain is Ubiquitin-conjugating enzyme E2 B (UBE2B) from Bos taurus (Bovine).